Here is a 501-residue protein sequence, read N- to C-terminus: Lysine--tRNA ligase (501 aa).

The Mg(2+) site is built by Glu412 and Glu419.

The protein belongs to the class-II aminoacyl-tRNA synthetase family. In terms of assembly, homodimer. It depends on Mg(2+) as a cofactor.

The protein resides in the cytoplasm. The catalysed reaction is tRNA(Lys) + L-lysine + ATP = L-lysyl-tRNA(Lys) + AMP + diphosphate. The protein is Lysine--tRNA ligase of Dechloromonas aromatica (strain RCB).